The following is a 487-amino-acid chain: Acetyl-coenzyme A carboxylase carboxyl transferase subunit beta, chloroplastic (487 aa).

Positions 223 to 487 (LWIQCDNCYG…FFPLKKNEIK (265 aa)) constitute a CoA carboxyltransferase N-terminal domain. Positions 227, 230, 243, and 246 each coordinate Zn(2+). The C4-type zinc-finger motif lies at 227–246 (CDNCYGLMYKKVKMNVCEQC).

The protein belongs to the AccD/PCCB family. As to quaternary structure, acetyl-CoA carboxylase is a heterohexamer composed of biotin carboxyl carrier protein, biotin carboxylase and 2 subunits each of ACCase subunit alpha and ACCase plastid-coded subunit beta (accD). It depends on Zn(2+) as a cofactor.

The protein localises to the plastid. The protein resides in the chloroplast stroma. It carries out the reaction N(6)-carboxybiotinyl-L-lysyl-[protein] + acetyl-CoA = N(6)-biotinyl-L-lysyl-[protein] + malonyl-CoA. The protein operates within lipid metabolism; malonyl-CoA biosynthesis; malonyl-CoA from acetyl-CoA: step 1/1. Its function is as follows. Component of the acetyl coenzyme A carboxylase (ACC) complex. Biotin carboxylase (BC) catalyzes the carboxylation of biotin on its carrier protein (BCCP) and then the CO(2) group is transferred by the transcarboxylase to acetyl-CoA to form malonyl-CoA. The protein is Acetyl-coenzyme A carboxylase carboxyl transferase subunit beta, chloroplastic of Lepidium virginicum (Virginia pepperweed).